The following is a 634-amino-acid chain: Probable sulfate transporter 3.5 (634 aa).

Polar residues predominate over residues 1–12 (MENTITSSTSSP). The tract at residues 1-25 (MENTITSSTSSPKGRGVNFSTPRGF) is disordered. Residues 1 to 81 (MENTITSSTS…KYDMQKLKYD (81 aa)) are Cytoplasmic-facing. The chain crosses the membrane as a helical span at residues 82–102 (VLAGITITSLAVPQGISYAKL). At 103-104 (AS) the chain is on the extracellular side. A helical membrane pass occupies residues 105 to 125 (IPPIIGLYSSFVPPFVYAVFG). Over 126–130 (SSNNL) the chain is Cytoplasmic. Residues 131–151 (AVGTVAACSLLIAETFGEEMI) form a helical membrane-spanning segment. The Extracellular portion of the chain corresponds to 152–158 (KNEPELY). The helical transmembrane segment at 159 to 179 (LHLIFTATLITGLFQFAMGFL) threads the bilayer. Residues 180–195 (RLGILVDFLSHSTITG) lie on the Cytoplasmic side of the membrane. Residues 196-216 (FMGGTAIIILLQQLKGIFGLV) traverse the membrane as a helical segment. The Extracellular portion of the chain corresponds to 217–239 (HFTHKTDVVSVLHSILDNRAEWK). A helical membrane pass occupies residues 240–260 (WQSTLAGVCFLVFLQSTRYIK). Residues 261 to 265 (QRYPK) are Cytoplasmic-facing. A helical transmembrane segment spans residues 266–286 (LFWVSAMGPMVVVVVGCVVAY). Residues 287–321 (LVKGTAHGIATVGPLKKGLNPPSIQLLNFDSKYLG) are Extracellular-facing. A helical membrane pass occupies residues 322–342 (MVFKAGIVTGLIALAEGIAIG). Topologically, residues 343–358 (RSFAVMKNEQTDGNKE) are cytoplasmic. Residues 359–379 (MIAFGLMNVIGSFTSCYLTTG) traverse the membrane as a helical segment. At 380-395 (PFSKTAVNYNAGTKTP) the chain is on the extracellular side. Residues 396–416 (MSNVVMGVCMMLVLLFLAPLF) form a helical membrane-spanning segment. The Cytoplasmic portion of the chain corresponds to 417 to 420 (SYTP). A helical transmembrane segment spans residues 421–441 (LVGLSAIIMSAMLGLINYEEM). Over 442-458 (YHLFKVDKFDFLVCMSA) the chain is Extracellular. Residues 459–479 (FFGVSFLSMDYGLIISVGFSI) form a helical membrane-spanning segment. The Cytoplasmic portion of the chain corresponds to 480-634 (VRALLYVARP…FNLTTTKPEV (155 aa)). One can recognise an STAS domain in the interval 508 to 623 (QYPASEEMLG…LSIDDAVQAC (116 aa)).

The protein belongs to the SLC26A/SulP transporter (TC 2.A.53) family.

It is found in the membrane. Its function is as follows. H(+)/sulfate cotransporter that may play a role in the regulation of sulfate assimilation. The polypeptide is Probable sulfate transporter 3.5 (SULTR3;5) (Arabidopsis thaliana (Mouse-ear cress)).